The following is a 106-amino-acid chain: Replication restart protein PriB (106 aa).

The SSB domain maps to 4-103 (TNRLVLSGTV…LHAEQIEFID (100 aa)).

This sequence belongs to the PriB family. In terms of assembly, homodimer. Interacts with PriA and DnaT. Component of the replication restart primosome. Primosome assembly occurs via a 'hand-off' mechanism. PriA binds to replication forks, subsequently PriB then DnaT bind; DnaT then displaces ssDNA to generate the helicase loading substrate.

In terms of biological role, involved in the restart of stalled replication forks, which reloads the replicative helicase on sites other than the origin of replication; the PriA-PriB pathway is the major replication restart pathway. During primosome assembly it facilitates complex formation between PriA and DnaT on DNA; stabilizes PriA on DNA. Stimulates the DNA unwinding activity of PriA helicase. The chain is Replication restart protein PriB from Yersinia enterocolitica serotype O:8 / biotype 1B (strain NCTC 13174 / 8081).